The sequence spans 384 residues: DNA polymerase IV (384 aa).

Residues 5–182 (IIHVDMDAFF…LPVTKVHGIG (178 aa)) enclose the UmuC domain. Mg(2+)-binding residues include D9, M10, and D103. Residue E104 is part of the active site.

The protein belongs to the DNA polymerase type-Y family. Monomer. It depends on Mg(2+) as a cofactor.

Its subcellular location is the cytoplasm. The catalysed reaction is DNA(n) + a 2'-deoxyribonucleoside 5'-triphosphate = DNA(n+1) + diphosphate. In terms of biological role, poorly processive, error-prone DNA polymerase involved in translesion repair and untargeted mutagenesis. Copies undamaged DNA at stalled replication forks, which arise in vivo from mismatched or misaligned primer ends. These misaligned primers can be extended by PolIV. Exhibits no 3'-5' exonuclease (proofreading) activity. Involved in translesional synthesis. Primer extension fidelity in vitro is temperature-dependent. Inserts a correct base opposite templating bases at 70 degrees Celsius, but at 37 degrees Celsius in addition to correct base pairing, base transitions, transversions and frameshifts can occur. Preferably forms erroneous base pairs C:T. Bypasses 8-oxo-dG oxidative damage by incorporating dATP or dCTP opposite of the damaged DNA template site at both temperatures in vitro. The protein is DNA polymerase IV of Caldanaerobacter subterraneus subsp. tengcongensis (strain DSM 15242 / JCM 11007 / NBRC 100824 / MB4) (Thermoanaerobacter tengcongensis).